A 428-amino-acid polypeptide reads, in one-letter code: Arabinosyltransferase RRA2 (428 aa).

Over 1 to 15 (MAGRRDRIQQLRGSR) the chain is Cytoplasmic. A helical; Signal-anchor for type II membrane protein membrane pass occupies residues 16 to 36 (IAIAIFVGILIGCVCSVLFPN). The Lumenal segment spans residues 37–428 (GFFNSGSSLI…ALDSFPDGSD (392 aa)). The short motif at 250–252 (DVD) is the DXD motif element. N-linked (GlcNAc...) asparagine glycosylation occurs at Asn-278.

Belongs to the glycosyltransferase 77 family. Expressed in roots, rosette and cauline leaves, stems, flowers and siliques.

Its subcellular location is the golgi apparatus membrane. Its function is as follows. Plays a role in the arabinosylation of cell wall components. Involved in the arabinosylation of extensin proteins in root hair cells. Extensins are structural glycoproteins present in cell walls and its arabinosylation is important for root hair cell development. This is Arabinosyltransferase RRA2 from Arabidopsis thaliana (Mouse-ear cress).